A 224-amino-acid polypeptide reads, in one-letter code: LexA repressor (224 aa).

The segment at residues 31–51 is a DNA-binding region (H-T-H motif); it reads RAEIANTLGFKSANAAEEHLQ. Residues Ser142 and Lys179 each act as for autocatalytic cleavage activity in the active site.

The protein belongs to the peptidase S24 family. Homodimer.

It carries out the reaction Hydrolysis of Ala-|-Gly bond in repressor LexA.. Its function is as follows. Represses a number of genes involved in the response to DNA damage (SOS response), including recA and lexA. In the presence of single-stranded DNA, RecA interacts with LexA causing an autocatalytic cleavage which disrupts the DNA-binding part of LexA, leading to derepression of the SOS regulon and eventually DNA repair. The polypeptide is LexA repressor (Delftia acidovorans (strain DSM 14801 / SPH-1)).